Reading from the N-terminus, the 427-residue chain is Dihydroorotase (427 aa).

2 residues coordinate Zn(2+): His-58 and His-60. Substrate contacts are provided by residues 60-62 and Asn-92; that span reads HLR. Asp-150, His-177, and His-230 together coordinate Zn(2+). Position 276 (Asn-276) interacts with substrate. Asp-303 contributes to the Zn(2+) binding site. Residue Asp-303 is part of the active site. Residues His-307 and 321–322 each bind substrate; that span reads FG.

The protein belongs to the metallo-dependent hydrolases superfamily. DHOase family. Class I DHOase subfamily. The cofactor is Zn(2+).

It carries out the reaction (S)-dihydroorotate + H2O = N-carbamoyl-L-aspartate + H(+). The protein operates within pyrimidine metabolism; UMP biosynthesis via de novo pathway; (S)-dihydroorotate from bicarbonate: step 3/3. Catalyzes the reversible cyclization of carbamoyl aspartate to dihydroorotate. This Macrococcus caseolyticus (strain JCSC5402) (Macrococcoides caseolyticum) protein is Dihydroorotase.